A 315-amino-acid chain; its full sequence is AT-hook motif nuclear-localized protein 19 (315 aa).

Over residues 1 to 25 (MANPWWTGQVNLSGLETTPPGSSQL) the composition is skewed to polar residues. Disordered regions lie at residues 1–104 (MANP…RDSP) and 239–285 (EEEA…YNMP). The segment covering 61 to 74 (DNLSGDDHEPREGA) has biased composition (basic and acidic residues). A DNA-binding region (a.T hook) is located at residues 80 to 92 (RRPRGRPAGSKNK). Residues 104-248 (PNALKSHVME…EEEAAERGGG (145 aa)) enclose the PPC domain. The segment covering 245–276 (RGGGGGSGGVVPGQLGGGGSPLSSGAGGGDGN) has biased composition (gly residues).

As to expression, slightly expressed in roots.

It is found in the nucleus. Its function is as follows. Transcription factor that specifically binds AT-rich DNA sequences related to the nuclear matrix attachment regions (MARs). Negatively regulates plant innate immunity (PTI) to pathogens through the down-regulation of the PAMP-triggered FRK1 expression. Positively regulates defense against fungal Verticillium infection. In Arabidopsis thaliana (Mouse-ear cress), this protein is AT-hook motif nuclear-localized protein 19.